The primary structure comprises 232 residues: Oxidoreductase 1 (232 aa).

This sequence belongs to the MQO family. FAD serves as cofactor.

Its function is as follows. Oxidoreductase; part of the gene cluster that mediates the biosynthesis of elsinochromes, pigments consisting of at least four interconvertible tautomers (A, B, C and D) that have a core phenolic quinone to which various side chains are attached and which play an important role in fungal pathogenesis. The non-reducing polyketide synthase PKS1 was proposed to iteratively catalyze decarboxylation between acetyl-CoA and malonyl-CoA subunits for polyketide chain elongation. The released polyketide undergoes cyclization to form an aromatic ring, and proceeds via serial modification steps to produce the heptaketide back- bone of elsinochrome. As elsinochrome has a symmetrical structure, two identical heptaketides are fused to form a core 1,2-dihydrobenzo-perylene ring structure, which can then be successively modified to produce the various derivatives of elsinochrome. Some of these reactions may be cooperatively carried out, at least in part, by the products of RDT1, OXR1 and PKS1. PRF1, embedded within the elsinochrome cluster possibly functions to stabilize some of the biosynthetic enzymes required for elsinochrome production. As prefoldin is a hexamer containing 2 a and 4 b subunits, additional prefoldin subunits, whose coding genes may not immediately link to the elsinochrome biosynthetic gene cluster, are required to fulfill the chaperone function. In addition, no methyltransferase-coding gene exists within the biosynthetic gene cluster, even though elsinochrome has four methyl groups at positions C3, C7, C8 and C12. Apparently, the identified gene cluster does not contain the entire entourage of genes responsible for elsinochrome biosynthesis. Once elsinochrome is synthesized, it must be exported outside the fungal cells, which is probably accomplished by the ECT1 transporter, to avoid toxicity. The sequence is that of Oxidoreductase 1 from Elsinoe fawcettii (Citrus scab fungus).